The following is a 420-amino-acid chain: Pyruvate dehydrogenase E1 component subunit alpha, mitochondrial (420 aa).

Residues 1–33 (MLAASFKRQPSQLVRGLGAVLRTPTRIGHVRTM) constitute a mitochondrion transit peptide. Pyruvate-binding residues include His112, Tyr138, Arg139, Ala177, Gly185, Val187, Asp216, Gly217, Ala218, Asn245, and Tyr247. Tyr138 and Arg139 together coordinate thiamine diphosphate. Thiamine diphosphate-binding residues include Gly185, Val187, Asp216, Gly217, Ala218, and Asn245. A Mg(2+)-binding site is contributed by Asp216. 2 residues coordinate Mg(2+): Asn245 and Tyr247. His312 serves as a coordination point for thiamine diphosphate. Residue Ser313 is modified to Phosphoserine; by PDK1 and PDK2.

In terms of assembly, pyruvate dehydrogenase (E1) is a tetramer of 2 alpha and 2 beta subunits. Eukaryotic pyruvate dehydrogenase (PDH) complexes are organized as a core consisting of the oligomeric dihydrolipoamide acetyl-transferase (E2), around which are arranged multiple copies of pyruvate dehydrogenase (E1), dihydrolipoamide dehydrogenase (E3) and protein X (E3BP) bound by non-covalent bonds. The cofactor is thiamine diphosphate. Requires Mg(2+) as cofactor. In terms of processing, phosphorylated at Ser-313 by pyruvate dehydrogenase kinases PKP1 (PDK1) and PKP2 (PDK2), and dephosphorylated by pyruvate dehydrogenase phosphatases PTC5 and PTC6.

The protein resides in the mitochondrion matrix. It carries out the reaction N(6)-[(R)-lipoyl]-L-lysyl-[protein] + pyruvate + H(+) = N(6)-[(R)-S(8)-acetyldihydrolipoyl]-L-lysyl-[protein] + CO2. Its activity is regulated as follows. E1 activity is regulated by phosphorylation (inactivation) and dephosphorylation (activation) of the alpha subunit. Its function is as follows. The pyruvate dehydrogenase complex catalyzes the overall conversion of pyruvate to acetyl-CoA and CO(2). This is Pyruvate dehydrogenase E1 component subunit alpha, mitochondrial (PDA1) from Saccharomyces cerevisiae (strain ATCC 204508 / S288c) (Baker's yeast).